Reading from the N-terminus, the 624-residue chain is tRNA uridine 5-carboxymethylaminomethyl modification enzyme MnmG (624 aa).

FAD contacts are provided by residues 14–19 (GGGHAG), Val-126, and Ser-181. Residue 273–287 (GPRYCPSIEDKVVRF) participates in NAD(+) binding. FAD is bound at residue Gln-370.

It belongs to the MnmG family. As to quaternary structure, homodimer. Heterotetramer of two MnmE and two MnmG subunits. It depends on FAD as a cofactor.

Its subcellular location is the cytoplasm. In terms of biological role, NAD-binding protein involved in the addition of a carboxymethylaminomethyl (cmnm) group at the wobble position (U34) of certain tRNAs, forming tRNA-cmnm(5)s(2)U34. In Geotalea uraniireducens (strain Rf4) (Geobacter uraniireducens), this protein is tRNA uridine 5-carboxymethylaminomethyl modification enzyme MnmG.